We begin with the raw amino-acid sequence, 127 residues long: Large ribosomal subunit protein bL12 (127 aa).

Belongs to the bacterial ribosomal protein bL12 family. As to quaternary structure, homodimer. Part of the ribosomal stalk of the 50S ribosomal subunit. Forms a multimeric L10(L12)X complex, where L10 forms an elongated spine to which 2 to 4 L12 dimers bind in a sequential fashion. Binds GTP-bound translation factors.

Its function is as follows. Forms part of the ribosomal stalk which helps the ribosome interact with GTP-bound translation factors. Is thus essential for accurate translation. This is Large ribosomal subunit protein bL12 from Thiobacillus denitrificans (strain ATCC 25259 / T1).